A 460-amino-acid polypeptide reads, in one-letter code: Cysteine--tRNA ligase (460 aa).

C28 contacts Zn(2+). The 'HIGH' region motif lies at 30–40 (NTVYDFCHIGH). Positions 209, 234, and 238 each coordinate Zn(2+). A 'KMSKS' region motif is present at residues 266-270 (KMSKS). K269 contributes to the ATP binding site.

This sequence belongs to the class-I aminoacyl-tRNA synthetase family. As to quaternary structure, monomer. Requires Zn(2+) as cofactor.

The protein localises to the cytoplasm. It catalyses the reaction tRNA(Cys) + L-cysteine + ATP = L-cysteinyl-tRNA(Cys) + AMP + diphosphate. The protein is Cysteine--tRNA ligase of Marinomonas sp. (strain MWYL1).